Here is a 287-residue protein sequence, read N- to C-terminus: Short-chain dehydrogenase virD (287 aa).

Residues V10, T36, D57, N85, Y149, K153, V182, and T184 each coordinate NADP(+). Y149 serves as the catalytic Proton acceptor. K153 (lowers pKa of active site Tyr) is an active-site residue.

This sequence belongs to the short-chain dehydrogenases/reductases (SDR) family.

It functions in the pathway secondary metabolite biosynthesis. Functionally, short-chain dehydrogenase; part of the gene cluster that mediates the biosynthesis of virensols and trichoxide, fungal natural products that contain or are derived from a salicylaldehyde core. The pathway begins with the synthesis of the reduced chain in virensol C by the highly reducing polyketide synthase virA via condensation of one acetate and 8 malonate units. VirA has interesting programming rules since the first 2 ketides are fully reduced, the 3 following ketides undergo beta-dehydration, and the last 3 ketides are only reduced to beta-hydroxys to yield the trihydroxy portion. The production of aldehyde virensol C by virA alone is surprising, since virA does not contain a reductase (R) domain that is typically associated with reductive product release in HRPKS. The cupin-domain enzyme virC is involved in enhancing virA product turnover. The short-chain dehydrogenase virB then oxidizes the C-7 alcohol of virensol C to a ketone, yielding virensol D. Virensol D is further transformed to salicylaldehyde 5-deoxyaurocitrin by the short-chain dehydrogenase virD. VirD catalyzes the dehydrogenation of C-3 to form the beta-ketone aldehyde, which is followed by the generation of the nucleophilic C-2 that is required for the intramolecular aldol condensation between C-2 and C-7, itself followed by dehydration and aromatization which leads to salicylaldehyde 5-deoxyaurocitrin. While the dehydrogenation of virensol D is definitely catalyzed by virD, the aldol condensation and dehydration may be uncatalyzed or assisted by virD. The short chain dehydrogenase virG then converts salicylaldehyde 5-deoxyaurocitrin into virensol B which is further hydroxylated by the cytochrome P450 monooxygenase virE to yield the hydroquinone virensol A. VirI then may oxidize virensol A to form the quinone, while virH performs the epoxidation. Finally, the two remaining short-chain dehydrogenases, virK and virL, are probably responsible for reducing the ketones to the corresponding alcohols to furnish the epoxycyclohexanol structure in trichoxide. In Hypocrea virens (strain Gv29-8 / FGSC 10586) (Gliocladium virens), this protein is Short-chain dehydrogenase virD.